A 480-amino-acid polypeptide reads, in one-letter code: Bindin (480 aa).

Residues 1 to 20 (MDSQVLPLILLIIVFAASSA) form the signal peptide. Positions 21 to 247 (HGHFPHRTNQ…GEMRAERQRR (227 aa)) are excised as a propeptide. The interval 161–211 (AEMRHRRSAKDDDVNKRASPRKGSSPAGKKVQIMEQDAGKGDAHNEKEVVK) is disordered. Over residues 197–211 (DAGKGDAHNEKEVVK) the composition is skewed to basic and acidic residues. The interval 377 to 385 (LRHLRHHSN) is fucose-binding domain. The helical transmembrane segment at 431 to 451 (GAGAVAGAAMAAGMPPYPGGA) threads the bilayer. A disordered region spans residues 452–480 (QGGMRVGGQPQNPMGGNAYNPMTGYRQQG).

It belongs to the bindin family.

The protein resides in the cytoplasmic vesicle. It is found in the secretory vesicle. The protein localises to the acrosome membrane. In terms of biological role, species-specific sea urchin sperm protein required for adhesion of sperm to the egg surface during fertilization. Bindin coats the acrosomal process after it is externalized by the acrosome reaction. It binds to sulfated, fucose-containing polysaccharides on the vitelline layer receptor proteoglycans which cover the egg plasma membrane. The polypeptide is Bindin (Arbacia punctulata (Punctuate sea urchin)).